Here is a 364-residue protein sequence, read N- to C-terminus: Protein FAM81A (364 aa).

A coiled-coil region spans residues Ile-80–Ile-107. Over residues Ala-275–His-300 the composition is skewed to basic and acidic residues. The tract at residues Ala-275–Gly-301 is disordered.

Belongs to the FAM81 family. Interacts with DLG4/PSD-95, GRIN2B/GLUN2B and SYNGAP1; the interactions facilitate condensate formation. Highly expressed in brain (at protein level).

The protein resides in the postsynaptic density. The protein localises to the cytoplasm. In terms of biological role, facilitates the interaction and assembly of proteins within the postsynaptic density by promoting the condensation of postsynaptic proteins via liquid-liquid phase separation. Required for neuronal activity. Accumulation at the postsynaptic density results in enlargement of dendritic spines. This chain is Protein FAM81A, found in Rattus norvegicus (Rat).